Reading from the N-terminus, the 278-residue chain is uncharacterized protein (278 aa).

The protein resides in the cytoplasm. Its subcellular location is the nucleus. In terms of biological role, probable methyltransferase. This is an uncharacterized protein from Schizosaccharomyces pombe (strain 972 / ATCC 24843) (Fission yeast).